Reading from the N-terminus, the 456-residue chain is RuvB-like 1 (456 aa).

Residue 70–77 (GPPGTGKT) participates in ATP binding.

The protein belongs to the RuvB family. As to quaternary structure, forms homohexameric rings. Can form a dodecamer with ruvbl2 made of two stacked hexameric rings. Is a component of the RNA polymerase II holoenzyme complex. Component of the chromatin-remodeling Ino80 complex. Component of some MLL1/MLL complex.

The protein localises to the nucleus. It is found in the dynein axonemal particle. The catalysed reaction is ATP + H2O = ADP + phosphate + H(+). In terms of biological role, has single-stranded DNA-stimulated ATPase and ATP-dependent DNA helicase (3' to 5') activity suggesting a role in nuclear processes such as recombination and transcription. Proposed core component of the chromatin remodeling INO80 complex which exhibits DNA- and nucleosome-activated ATPase activity and catalyzes ATP-dependent nucleosome sliding. In Xenopus laevis (African clawed frog), this protein is RuvB-like 1 (ruvbl1).